Here is a 333-residue protein sequence, read N- to C-terminus: MKGKLLKGVLSLGVGLGALYSGTSAQAEASTNQNDTLKVMTHNVYMLSTNLYPNWGQTERADLIGAADYIKNQDVVILNEVFDNSASDRLLGNLKKEYPNQTAVLGRSSGSEWDKTLGNYSSSTPEDGGVAIVSKWPIAEKIQYVFAKGCGPDNLSNKGFVYTKIKKNDRFVHVIGTHLQAEDSMCGKTSPASVRTNQLKEIQDFIKNKNIPNNEYVLIGGDMNVNKINAENNNDSEYASMFKTLNASVPSYTGHTATWDATTNSIAKYNFPDSPAEYLDYIIASKDHANPSYIENKVLQPKSPQWTVTSWFQKYTYNDYSDDYPVEATISMK.

The N-terminal stretch at M1–A27 is a signal peptide. C150 and C186 form a disulfide bridge.

This sequence belongs to the neutral sphingomyelinase family. Requires Mg(2+) as cofactor.

It is found in the secreted. The catalysed reaction is a sphingomyelin + H2O = phosphocholine + an N-acylsphing-4-enine + H(+). Its activity is regulated as follows. Activated by cobalt and manganese ions. Functionally, required, with sphingomyelinase, to effect target cell lysis (hemolysis). The polypeptide is Sphingomyelinase C (sph) (Bacillus cereus).